Reading from the N-terminus, the 142-residue chain is MAKRVAAIVKLQVPAGKATPAPPVGPALGQHGVNIMAFVKEYNERTAAQAGLIIPVEITVYEDRSFTFVTKTPPAAVLLKKAAGLETASGEPNKKKVAKLPRSKVKEIAELKMPDLNAASIEAAMRMIEGTARSMGIDIVEG.

This sequence belongs to the universal ribosomal protein uL11 family. Part of the ribosomal stalk of the 50S ribosomal subunit. Interacts with L10 and the large rRNA to form the base of the stalk. L10 forms an elongated spine to which L12 dimers bind in a sequential fashion forming a multimeric L10(L12)X complex. Post-translationally, one or more lysine residues are methylated.

Its function is as follows. Forms part of the ribosomal stalk which helps the ribosome interact with GTP-bound translation factors. The sequence is that of Large ribosomal subunit protein uL11 from Pelotomaculum thermopropionicum (strain DSM 13744 / JCM 10971 / SI).